The primary structure comprises 524 residues: Glutamyl-tRNA(Gln) amidotransferase subunit A (524 aa).

Active-site charge relay system residues include lysine 109 and serine 184. Serine 208 functions as the Acyl-ester intermediate in the catalytic mechanism.

It belongs to the amidase family. GatA subfamily. In terms of assembly, heterotrimer of A, B and C subunits.

The enzyme catalyses L-glutamyl-tRNA(Gln) + L-glutamine + ATP + H2O = L-glutaminyl-tRNA(Gln) + L-glutamate + ADP + phosphate + H(+). Functionally, allows the formation of correctly charged Gln-tRNA(Gln) through the transamidation of misacylated Glu-tRNA(Gln) in organisms which lack glutaminyl-tRNA synthetase. The reaction takes place in the presence of glutamine and ATP through an activated gamma-phospho-Glu-tRNA(Gln). The polypeptide is Glutamyl-tRNA(Gln) amidotransferase subunit A (Tropheryma whipplei (strain TW08/27) (Whipple's bacillus)).